A 117-amino-acid chain; its full sequence is Transcription elongation factor A protein-like 8 (117 aa).

2 stretches are compositionally biased toward basic and acidic residues: residues 1–24 (MQKS…DRPL) and 61–74 (YKED…DPEE). The interval 1 to 74 (MQKSCGENER…SPVRHLDPEE (74 aa)) is disordered. Positions 73–100 (EEMIRGADELERLREEIRRVRNKFVMMH) form a coiled coil.

The protein belongs to the TFS-II family. TFA subfamily.

The protein localises to the nucleus. May be involved in transcriptional regulation. The chain is Transcription elongation factor A protein-like 8 (TCEAL8) from Bos taurus (Bovine).